The following is a 417-amino-acid chain: Transcobalamin-1 (417 aa).

Residues 1–25 (MRQSHQLPLVGLLLFSLIPSQLCQS) form the signal peptide. Positions 24–308 (QSCVVSEKDY…DVTKLLLVPK (285 aa)) are globular N-terminal alpha domain. N90 carries N-linked (GlcNAc...) asparagine glycosylation. Position 143–147 (143–147 (TNYYQ)) interacts with cyanocob(III)alamin. A disulfide bridge links C156 with C198. N-linked (GlcNAc...) asparagine glycans are attached at residues N161, N166, and N179. Cyanocob(III)alamin contacts are provided by D187 and Q287. The segment at 309–327 (VQVNITDEPVPVVPTLSPE) is flexible linker. 4 N-linked (GlcNAc...) asparagine glycosylation sites follow: N312, N328, N345, and N360. Residues 328–417 (NISVIYCVKI…GIMLSKMESI (90 aa)) form a globular C-terminal beta domain region. Cyanocob(III)alamin contacts are provided by residues 376 to 377 (YI) and 393 to 395 (WEH).

Belongs to the eukaryotic cobalamin transport proteins family. Post-translationally, contains about 30% carbohydrates. As to expression, haptocorrins are a family of cobalamin-binding glycoproteins found in blood, salivary and mucosal secretions.

The protein resides in the secreted. Functionally, binds vitamin B12 with femtomolar affinity and protects it from the acidic environment of the stomach. Binds to cobalamin and to cobalamin analogs such as cobinamide. The protein is Transcobalamin-1 (TCN1) of Sus scrofa (Pig).